Reading from the N-terminus, the 220-residue chain is Iron-sulfur cluster repair protein YtfE (220 aa).

Belongs to the RIC family. YtfE subfamily. As to quaternary structure, homodimer.

The protein resides in the cytoplasm. Functionally, di-iron-containing protein involved in the repair of iron-sulfur clusters damaged by oxidative and nitrosative stress conditions. The sequence is that of Iron-sulfur cluster repair protein YtfE from Shigella boydii serotype 4 (strain Sb227).